A 618-amino-acid chain; its full sequence is UvrABC system protein C (618 aa).

The 79-residue stretch at 20-98 (TAPGVYRMYA…IKSLSPRYNV (79 aa)) folds into the GIY-YIG domain. The 36-residue stretch at 207 to 242 (DQLGEEIMQSMQQASEALEFERAARLRDLLSSLRSM) folds into the UVR domain.

This sequence belongs to the UvrC family. Interacts with UvrB in an incision complex.

Its subcellular location is the cytoplasm. Functionally, the UvrABC repair system catalyzes the recognition and processing of DNA lesions. UvrC both incises the 5' and 3' sides of the lesion. The N-terminal half is responsible for the 3' incision and the C-terminal half is responsible for the 5' incision. The sequence is that of UvrABC system protein C from Xanthomonas oryzae pv. oryzae (strain MAFF 311018).